The following is a 1498-amino-acid chain: DNA-directed RNA polymerase subunit beta' (1498 aa).

Zn(2+) contacts are provided by Cys67, Cys69, Cys82, and Cys85. Mg(2+) contacts are provided by Asp499, Asp501, and Asp503. The Zn(2+) site is built by Cys867, Cys943, Cys950, and Cys953.

It belongs to the RNA polymerase beta' chain family. In terms of assembly, the RNAP catalytic core consists of 2 alpha, 1 beta, 1 beta' and 1 omega subunit. When a sigma factor is associated with the core the holoenzyme is formed, which can initiate transcription. Mg(2+) is required as a cofactor. The cofactor is Zn(2+).

It carries out the reaction RNA(n) + a ribonucleoside 5'-triphosphate = RNA(n+1) + diphosphate. Its function is as follows. DNA-dependent RNA polymerase catalyzes the transcription of DNA into RNA using the four ribonucleoside triphosphates as substrates. The protein is DNA-directed RNA polymerase subunit beta' of Chlorobium luteolum (strain DSM 273 / BCRC 81028 / 2530) (Pelodictyon luteolum).